Reading from the N-terminus, the 353-residue chain is DNA integrity scanning protein DisA (353 aa).

A DAC domain is found at 6 to 144 (DKELMNILKI…GGIKYVLRDS (139 aa)). Residues G73, L91, and 104–108 (TRHRT) contribute to the ATP site.

It belongs to the DisA family. Homooctamer. Requires Mg(2+) as cofactor.

It carries out the reaction 2 ATP = 3',3'-c-di-AMP + 2 diphosphate. Functionally, participates in a DNA-damage check-point that is active prior to asymmetric division when DNA is damaged. DisA forms globular foci that rapidly scan along the chromosomes during sporulation, searching for lesions. When a lesion is present, DisA pauses at the lesion site. This triggers a cellular response that culminates in a temporary block in sporulation initiation. Also has diadenylate cyclase activity, catalyzing the condensation of 2 ATP molecules into cyclic di-AMP (c-di-AMP). c-di-AMP acts as a signaling molecule that couples DNA integrity with progression of sporulation. The rise in c-di-AMP level generated by DisA while scanning the chromosome, operates as a positive signal that advances sporulation; upon encountering a lesion, the DisA focus arrests at the damaged site and halts c-di-AMP synthesis. The polypeptide is DNA integrity scanning protein DisA (Clostridium botulinum (strain Kyoto / Type A2)).